Reading from the N-terminus, the 218-residue chain is Pyrrolidone-carboxylate peptidase 2 (218 aa).

Catalysis depends on residues glutamate 83, cysteine 146, and histidine 170.

It belongs to the peptidase C15 family. As to quaternary structure, homotetramer.

Its subcellular location is the cytoplasm. It catalyses the reaction Release of an N-terminal pyroglutamyl group from a polypeptide, the second amino acid generally not being Pro.. Its function is as follows. Removes 5-oxoproline from various penultimate amino acid residues except L-proline. The polypeptide is Pyrrolidone-carboxylate peptidase 2 (Photorhabdus laumondii subsp. laumondii (strain DSM 15139 / CIP 105565 / TT01) (Photorhabdus luminescens subsp. laumondii)).